The following is a 539-amino-acid chain: GMP synthase [glutamine-hydrolyzing] (539 aa).

One can recognise a Glutamine amidotransferase type-1 domain in the interval 4-202 (KILILDFGSQ…VLDIAGAKPD (199 aa)). Cysteine 81 (nucleophile) is an active-site residue. Catalysis depends on residues histidine 176 and glutamate 178. One can recognise a GMPS ATP-PPase domain in the interval 203–395 (WIMRDHIEEA…LGLPAEMVYR (193 aa)). 230-236 (SGGVDSS) is a binding site for ATP.

In terms of assembly, homodimer.

The catalysed reaction is XMP + L-glutamine + ATP + H2O = GMP + L-glutamate + AMP + diphosphate + 2 H(+). It functions in the pathway purine metabolism; GMP biosynthesis; GMP from XMP (L-Gln route): step 1/1. Catalyzes the synthesis of GMP from XMP. This is GMP synthase [glutamine-hydrolyzing] from Burkholderia pseudomallei (strain 1106a).